Here is a 394-residue protein sequence, read N- to C-terminus: Quinolinate synthase (394 aa).

The iminosuccinate site is built by H67 and S84. C131 is a [4Fe-4S] cluster binding site. Residues 163–165 (YMN) and S184 each bind iminosuccinate. C254 contacts [4Fe-4S] cluster. Iminosuccinate is bound by residues 280–282 (HPE) and T297. C346 is a binding site for [4Fe-4S] cluster.

It belongs to the quinolinate synthase family. Type 3 subfamily. [4Fe-4S] cluster is required as a cofactor.

The protein resides in the cytoplasm. The catalysed reaction is iminosuccinate + dihydroxyacetone phosphate = quinolinate + phosphate + 2 H2O + H(+). The protein operates within cofactor biosynthesis; NAD(+) biosynthesis; quinolinate from iminoaspartate: step 1/1. Functionally, catalyzes the condensation of iminoaspartate with dihydroxyacetone phosphate to form quinolinate. The sequence is that of Quinolinate synthase from Streptomyces coelicolor (strain ATCC BAA-471 / A3(2) / M145).